The chain runs to 1574 residues: Synaptojanin-1 (1574 aa).

The SAC domain maps to 119-442 (VRKVLNSGNF…GDSISKIYAG (324 aa)). Phosphoserine is present on residues S820 and S830. The RRM domain maps to 894-971 (GTVLVSIKSS…RTITITLKSP (78 aa)). Positions 1029-1054 (HLQPSSSSGLGTSPSSSPRTSPCQSP) are enriched in low complexity. The tract at residues 1029-1327 (HLQPSSSSGL…GVKQEPTLKS (299 aa)) is disordered. S1053 is subject to Phosphoserine. The segment covering 1080-1100 (SSQGSPVDTQPAAQKDSSQTL) has biased composition (polar residues). Residues 1105 to 1127 (PPPPRPVAPPARPAPPQRPPPPS) are compositionally biased toward pro residues. Phosphoserine occurs at positions 1147 and 1175. An Omega-N-methylarginine modification is found at R1198. The residue at position 1217 (T1217) is a Phosphothreonine. A compositionally biased stretch (pro residues) spans 1268 to 1287 (TMPPSGPQPNLETPPQPPPR). Over residues 1288–1307 (SRSSQSLPSDSSPQLQQEQP) the composition is skewed to low complexity. Residues S1290 and S1350 each carry the phosphoserine modification. T1354 carries the post-translational modification Phosphothreonine. Disordered regions lie at residues 1363-1507 (LPSA…SVCP) and 1532-1574 (LPAR…FTER). 4 stretches are compositionally biased toward polar residues: residues 1364–1379 (PSAS…SVSC), 1393–1402 (QESMGSSANP), 1424–1436 (RVQS…TSWL), and 1472–1484 (DLQS…TSNP). The segment at 1403 to 1425 (FPSLPCRNPFTDRTAAPGNPFRV) is 3 X 3 AA repeats of N-P-F. A compositionally biased stretch (pro residues) spans 1535–1548 (RRPPPPPPPVPLLP). Residues 1549–1563 (PGTTSSAGPSTTLPS) show a composition bias toward low complexity. The segment covering 1565-1574 (APSTLDFTER) has biased composition (polar residues).

The protein belongs to the synaptojanin family. In the central section; belongs to the inositol 1,4,5-trisphosphate 5-phosphatase family. As to quaternary structure, interacts with ASH/GRB2. Interacts with PACSIN1, PACSIN2 and PACSIN3. Interacts with AMPH, SH3GL1, SH3GL2 and SH3GL3. Interacts with MYO1E (via SH3 domain). Interacts with BIN1 and DNM1. Interacts with EPS15.

The protein localises to the cytoplasm. It localises to the perinuclear region. It catalyses the reaction a 1,2-diacyl-sn-glycero-3-phospho-(1D-myo-inositol-4,5-bisphosphate) + H2O = a 1,2-diacyl-sn-glycero-3-phospho-(1D-myo-inositol 4-phosphate) + phosphate. Its function is as follows. Phosphatase that acts on various phosphoinositides, including phosphatidylinositol 4-phosphate, phosphatidylinositol (4,5)-bisphosphate and phosphatidylinositol (3,4,5)-trisphosphate. Has a role in clathrin-mediated endocytosis. Hydrolyzes PIP2 bound to actin regulatory proteins resulting in the rearrangement of actin filaments downstream of tyrosine kinase and ASH/GRB2. This is Synaptojanin-1 (Synj1) from Mus musculus (Mouse).